The sequence spans 58 residues: uncharacterized protein (58 aa).

The protein resides in the plastid. It localises to the chloroplast. This is an uncharacterized protein from Porphyra purpurea (Red seaweed).